We begin with the raw amino-acid sequence, 462 residues long: A-type ATP synthase subunit B (462 aa).

The protein belongs to the ATPase alpha/beta chains family. Has multiple subunits with at least A(3), B(3), C, D, E, F, H, I and proteolipid K(x).

It is found in the cell membrane. Functionally, component of the A-type ATP synthase that produces ATP from ADP in the presence of a proton gradient across the membrane. The B chain is a regulatory subunit. The polypeptide is A-type ATP synthase subunit B (Methanococcus vannielii (strain ATCC 35089 / DSM 1224 / JCM 13029 / OCM 148 / SB)).